We begin with the raw amino-acid sequence, 129 residues long: Snaclec coagulation factor IX-binding protein subunit A (129 aa).

The C-type lectin domain maps to 1-129 (DCPSGWSSYE…GQQNPFVCEA (129 aa)). 3 cysteine pairs are disulfide-bonded: Cys-2-Cys-13, Cys-30-Cys-127, and Cys-102-Cys-119. Positions 41, 43, and 47 each coordinate Ca(2+). Position 128 (Glu-128) interacts with Ca(2+).

This sequence belongs to the snaclec family. As to quaternary structure, heterodimer of subunits A and B; disulfide-linked. As to expression, expressed by the venom gland.

Its subcellular location is the secreted. Its function is as follows. Anticoagulant protein which binds to the gamma-carboxyglutamic acid-domain regions of factor IX (F9) (but not factor X) in the presence of calcium with a 1 to 1 stoichiometry. The sequence is that of Snaclec coagulation factor IX-binding protein subunit A from Protobothrops flavoviridis (Habu).